The sequence spans 174 residues: Cuticle protein 1 (174 aa).

An N-terminal signal peptide occupies residues 1-18 (MRFLIAFVAILGYASASA).

It is found in the secreted. This Lonomia obliqua (Moth) protein is Cuticle protein 1.